A 207-amino-acid polypeptide reads, in one-letter code: Gap junction epsilon-1 protein (207 aa).

Residues 1–22 (MSLNYIKNFYEGCLRPPTVIGQ) are Cytoplasmic-facing. Residues 23 to 43 (FHTLFFGSVRTFFLGVLGFAV) traverse the membrane as a helical segment. At 44 to 74 (YGNEALHFSCDPDKRELNLYCYNQFRPITPQ) the chain is on the extracellular side. Disulfide bonds link Cys-53–Cys-161 and Cys-64–Cys-147. Residues 75 to 95 (VFWALQLVTVLVPGAVFHLYA) form a helical membrane-spanning segment. Topologically, residues 96 to 111 (ACKNIDQEEILHRPMS) are cytoplasmic. The chain crosses the membrane as a helical span at residues 112–132 (TVFYIISVLLRIILEVLAFWL). Topologically, residues 133–175 (QSHLFGFLVDPIFMCDVTGLGKILNVSKCMVPEHFEKTIFLSA) are extracellular. The chain crosses the membrane as a helical span at residues 176 to 196 (MYTFTIITILLCIAEIFEILF). At 197-207 (RRLGYLNQPMT) the chain is on the cytoplasmic side.

The protein belongs to the connexin family. Beta-type (group I) subfamily. In terms of assembly, a connexon is composed of a hexamer of connexins.

The protein resides in the cell membrane. Functionally, has significant hemichannel activity. However, has only low-efficiency gap junction activity and probably does not function as a gap junction channel in vivo. The protein is Gap junction epsilon-1 protein of Danio rerio (Zebrafish).